The primary structure comprises 278 residues: 4-deoxy-L-threo-5-hexosulose-uronate ketol-isomerase (278 aa).

His196, His198, Glu203, and His245 together coordinate Zn(2+).

It belongs to the KduI family. The cofactor is Zn(2+).

It catalyses the reaction 5-dehydro-4-deoxy-D-glucuronate = 3-deoxy-D-glycero-2,5-hexodiulosonate. Its pathway is glycan metabolism; pectin degradation; 2-dehydro-3-deoxy-D-gluconate from pectin: step 4/5. Functionally, catalyzes the isomerization of 5-dehydro-4-deoxy-D-glucuronate to 3-deoxy-D-glycero-2,5-hexodiulosonate. In Salmonella dublin (strain CT_02021853), this protein is 4-deoxy-L-threo-5-hexosulose-uronate ketol-isomerase.